The primary structure comprises 415 residues: Serine hydroxymethyltransferase (415 aa).

(6S)-5,6,7,8-tetrahydrofolate-binding positions include leucine 117 and 121–123 (GHL). Lysine 225 is subject to N6-(pyridoxal phosphate)lysine. (6S)-5,6,7,8-tetrahydrofolate contacts are provided by residues glutamate 241 and 349–351 (SPF).

It belongs to the SHMT family. In terms of assembly, homodimer. Requires pyridoxal 5'-phosphate as cofactor.

It is found in the cytoplasm. It catalyses the reaction (6R)-5,10-methylene-5,6,7,8-tetrahydrofolate + glycine + H2O = (6S)-5,6,7,8-tetrahydrofolate + L-serine. It participates in one-carbon metabolism; tetrahydrofolate interconversion. Its pathway is amino-acid biosynthesis; glycine biosynthesis; glycine from L-serine: step 1/1. Catalyzes the reversible interconversion of serine and glycine with tetrahydrofolate (THF) serving as the one-carbon carrier. This reaction serves as the major source of one-carbon groups required for the biosynthesis of purines, thymidylate, methionine, and other important biomolecules. Also exhibits THF-independent aldolase activity toward beta-hydroxyamino acids, producing glycine and aldehydes, via a retro-aldol mechanism. This is Serine hydroxymethyltransferase from Campylobacter hominis (strain ATCC BAA-381 / DSM 21671 / CCUG 45161 / LMG 19568 / NCTC 13146 / CH001A).